Here is a 475-residue protein sequence, read N- to C-terminus: Ataxin-10 (475 aa).

Position 10 is an omega-N-methylarginine (Arg10). Phosphoserine is present on residues Ser12 and Ser77. Thr82 bears the Phosphothreonine mark. Residue Ser430 is modified to Phosphoserine.

Belongs to the ataxin-10 family. In terms of assembly, homooligomer. Interacts with GNB2. Interacts with IQCB1. Interacts with OGT. Interacts with PLK1. Polyubiquitinated. Post-translationally, phosphorylation at Ser-12 by AURKB promotes the association of ATXN10 with PLK1. Phosphorylation at Ser-77 and Thr-82 by PLK1 may play a role in the regulation of cytokinesis and may stimulate the proteasome-mediated degradation of ATXN10. In high cell density areas; cerebellar cortex, dentate gyrus, hippocampus, anterior olfactory nucleus, primary olfactory cortex.

It is found in the cytoplasm. The protein localises to the perinuclear region. It localises to the midbody. Its subcellular location is the cytoskeleton. The protein resides in the cilium basal body. It is found in the microtubule organizing center. The protein localises to the centrosome. It localises to the centriole. Its function is as follows. May play a role in the regulation of cytokinesis. May play a role in signaling by stimulating protein glycosylation. Induces neuritogenesis by activating the Ras-MAP kinase pathway and is necessary for the survival of cerebellar neurons. Does not appear to play a major role in ciliogenesis. The polypeptide is Ataxin-10 (Atxn10) (Mus musculus (Mouse)).